The sequence spans 137 residues: Large ribosomal subunit protein uL16 (137 aa).

The protein belongs to the universal ribosomal protein uL16 family. As to quaternary structure, part of the 50S ribosomal subunit.

In terms of biological role, binds 23S rRNA and is also seen to make contacts with the A and possibly P site tRNAs. The sequence is that of Large ribosomal subunit protein uL16 from Stenotrophomonas maltophilia (strain R551-3).